Consider the following 358-residue polypeptide: ATPase ASNA1 homolog (358 aa).

Lys-35 to Thr-42 provides a ligand contact to ATP. Residue Asp-64 is part of the active site. Glu-235 and Asn-262 together coordinate ATP.

The protein belongs to the arsA ATPase family. As to quaternary structure, homodimer.

It localises to the cytoplasm. The protein resides in the endoplasmic reticulum. In terms of biological role, ATPase required for the post-translational delivery of tail-anchored (TA) proteins to the endoplasmic reticulum. Recognizes and selectively binds the transmembrane domain of TA proteins in the cytosol. This complex then targets to the endoplasmic reticulum by membrane-bound receptors, where the tail-anchored protein is released for insertion. This process is regulated by ATP binding and hydrolysis. ATP binding drives the homodimer towards the closed dimer state, facilitating recognition of newly synthesized TA membrane proteins. ATP hydrolysis is required for insertion. Subsequently, the homodimer reverts towards the open dimer state, lowering its affinity for the membrane-bound receptor, and returning it to the cytosol to initiate a new round of targeting. The protein is ATPase ASNA1 homolog of Babesia bovis.